A 143-amino-acid polypeptide reads, in one-letter code: Large ribosomal subunit protein uL15 (143 aa).

Basic residues-rich tracts occupy residues 1–13 (MIRKSKKITKMRG) and 23–38 (KKHRGAGHRGGRGNAG). Residues 1–38 (MIRKSKKITKMRGSRTCGYGEAKKHRGAGHRGGRGNAG) form a disordered region.

It belongs to the universal ribosomal protein uL15 family. As to quaternary structure, part of the 50S ribosomal subunit.

Functionally, binds to the 23S rRNA. This is Large ribosomal subunit protein uL15 from Methanococcus maripaludis (strain C5 / ATCC BAA-1333).